Consider the following 68-residue polypeptide: Guanine nucleotide-binding protein G(I)/G(S)/G(O) subunit gamma-5 (68 aa).

N-acetylserine is present on Ser-2. Residue Ser-2 is modified to Phosphoserine. Cysteine methyl ester is present on Cys-65. Residue Cys-65 is the site of S-geranylgeranyl cysteine attachment. A propeptide spans Ser-66–Leu-68 (removed in mature form).

The protein belongs to the G protein gamma family. As to quaternary structure, g proteins are composed of 3 units, alpha, beta and gamma. Expressed in a variety of tissues.

The protein resides in the cell membrane. In terms of biological role, guanine nucleotide-binding proteins (G proteins) are involved as a modulator or transducer in various transmembrane signaling systems. The beta and gamma chains are required for the GTPase activity, for replacement of GDP by GTP, and for G protein-effector interaction. This Bos taurus (Bovine) protein is Guanine nucleotide-binding protein G(I)/G(S)/G(O) subunit gamma-5 (GNG5).